Reading from the N-terminus, the 682-residue chain is Penicillin-binding protein activator LpoA (682 aa).

Positions 1 to 26 (MLPLNSVRTHAGRLVPVMLAALFLAG) are cleaved as a signal peptide. Residue C27 is the site of N-palmitoyl cysteine attachment. C27 carries S-diacylglycerol cysteine lipidation. 2 disordered regions span residues 240 to 262 (AKQL…TGET) and 314 to 341 (ANNA…VSPT). Low complexity predominate over residues 248-262 (GGTPPAAAAPTTGET).

This sequence belongs to the LpoA family. Interacts with PBP1a.

The protein resides in the cell outer membrane. In terms of biological role, regulator of peptidoglycan synthesis that is essential for the function of penicillin-binding protein 1A (PBP1a). This is Penicillin-binding protein activator LpoA from Dickeya chrysanthemi (strain Ech1591) (Dickeya zeae (strain Ech1591)).